The sequence spans 206 residues: Ribosome maturation factor RimP (206 aa).

It belongs to the RimP family.

The protein resides in the cytoplasm. Functionally, required for maturation of 30S ribosomal subunits. This Paracoccus denitrificans (strain Pd 1222) protein is Ribosome maturation factor RimP.